The primary structure comprises 179 residues: Adenine phosphoribosyltransferase (179 aa).

Belongs to the purine/pyrimidine phosphoribosyltransferase family. In terms of assembly, homodimer.

It localises to the cytoplasm. The enzyme catalyses AMP + diphosphate = 5-phospho-alpha-D-ribose 1-diphosphate + adenine. It participates in purine metabolism; AMP biosynthesis via salvage pathway; AMP from adenine: step 1/1. Catalyzes a salvage reaction resulting in the formation of AMP, that is energically less costly than de novo synthesis. In Histophilus somni (strain 129Pt) (Haemophilus somnus), this protein is Adenine phosphoribosyltransferase.